Consider the following 250-residue polypeptide: Tail assembly protein GT (250 aa).

This sequence belongs to the lambda-like tail assembly protein family. Interacts (via C-terminus) with tail tube protein. Interacts (via N-terminus) with the tail assembly protein G and the tape measure protein.

The protein localises to the host cytoplasm. In terms of biological role, promotes tail assembly by creating a scaffold for the tail tube proteins. Tail assembly proteins G and GT probably wrap the linear tape measure protein to create a tail assembly scaffold. This allows the polymerization of the tail tube protein, during which G and GT are released, therefore they are absent in the mature virion. The tail assembly protein GT is produced by a rare -1 ribosomal frameshift. The ratio of translated G/GT is about 20, and this ratio is important for proper tail assembly. The protein is Tail assembly protein GT of Escherichia coli (Bacteriophage N15).